Here is a 131-residue protein sequence, read N- to C-terminus: uncharacterized protein (131 aa).

The region spanning 26–124 is the HTH hxlR-type domain; it reads CSVEVAVNEI…WGKMYGSHQE (99 aa).

This is an uncharacterized protein from Methanothermobacter thermautotrophicus (strain ATCC 29096 / DSM 1053 / JCM 10044 / NBRC 100330 / Delta H) (Methanobacterium thermoautotrophicum).